The sequence spans 467 residues: Glutamate--tRNA ligase (467 aa).

The short motif at 14 to 24 (PSPTGFLHLGG) is the 'HIGH' region element. Over residues 124 to 134 (PRYDGTWRPEP) the composition is skewed to basic and acidic residues. The segment at 124–156 (PRYDGTWRPEPGKTLPPVPAGRKPVVRFKNPQD) is disordered. Positions 246–250 (KLSKR) match the 'KMSKS' region motif. K249 is a binding site for ATP.

The protein belongs to the class-I aminoacyl-tRNA synthetase family. Glutamate--tRNA ligase type 1 subfamily. Monomer.

The protein localises to the cytoplasm. It carries out the reaction tRNA(Glu) + L-glutamate + ATP = L-glutamyl-tRNA(Glu) + AMP + diphosphate. Its function is as follows. Catalyzes the attachment of glutamate to tRNA(Glu) in a two-step reaction: glutamate is first activated by ATP to form Glu-AMP and then transferred to the acceptor end of tRNA(Glu). In Bordetella petrii (strain ATCC BAA-461 / DSM 12804 / CCUG 43448), this protein is Glutamate--tRNA ligase.